Reading from the N-terminus, the 77-residue chain is Defensin-like protein 161 (77 aa).

The first 27 residues, 1–27 (MAKLSCSYLLVFMLVFSAILMVEKVEG), serve as a signal peptide directing secretion. 4 cysteine pairs are disulfide-bonded: Cys-30–Cys-77, Cys-40–Cys-59, Cys-45–Cys-71, and Cys-49–Cys-73.

Belongs to the DEFL family.

The protein resides in the secreted. This chain is Defensin-like protein 161 (LCR27), found in Arabidopsis thaliana (Mouse-ear cress).